We begin with the raw amino-acid sequence, 608 residues long: Cytoplasmic dynein 1 intermediate chain 1 (608 aa).

2 stretches are compositionally biased toward basic and acidic residues: residues 1–13 (MSDK…ELER) and 20–60 (QIRE…RETE). The disordered stretch occupies residues 1–106 (MSDKSDLKAE…SGDLGPLTRR (106 aa)). Serine 2 carries the N-acetylserine modification. Phosphoserine is present on serine 50. The span at 70–79 (PEPPLVPTPM) shows a compositional bias: pro residues. Over residues 80 to 90 (SPSSKSVSTPS) the composition is skewed to low complexity. Serine 83 carries the phosphoserine modification. Phosphothreonine is present on threonine 88. Residues serine 90, serine 94, and serine 97 each carry the phosphoserine modification. An interaction with DYNLT1 region spans residues 110–126 (KLGVSKITQVDFLPREV). The interval 132-184 (ETQTPLATHQSEEDEDDEEMVEPKGDQDSEQENEDKKQEVKEAPPRELTEEEK) is disordered. Threonine 139 bears the Phosphothreonine mark. A phosphoserine mark is found at serine 142 and serine 160. Residues 165-184 (EDKKQEVKEAPPRELTEEEK) are compositionally biased toward basic and acidic residues. 7 WD repeats span residues 248–297 (SKHR…TTPE), 301–341 (HCQS…RTPV), 350–391 (AHTH…TPQE), 400–440 (SKPV…AGIG), 445–490 (GHQG…PLYS), 493–533 (DNAD…EVPT), and 539–578 (EGAS…VPHN). Serine 598 bears the Phosphoserine mark.

Belongs to the dynein intermediate chain family. Homodimer. The cytoplasmic dynein 1 complex consists of two catalytic heavy chains (HCs) and a number of non-catalytic subunits presented by intermediate chains (ICs), light intermediate chains (LICs) and light chains (LCs); the composition seems to vary in respect to the IC, LIC and LC composition. The heavy chain homodimer serves as a scaffold for the probable homodimeric assembly of the respective non-catalytic subunits. The ICs and LICs bind directly to the HC dimer and the LCs assemble on the IC dimer. Interacts with DYNC1H1. Interacts with DYNLT1 and DYNLT3. Interacts with DCTN1. Interacts with MCRS1; the interaction is required for the proper distribution of centriolar satellites.

The protein resides in the cytoplasm. The protein localises to the chromosome. It localises to the centromere. It is found in the kinetochore. Its subcellular location is the cytoskeleton. The protein resides in the spindle pole. In terms of biological role, acts as one of several non-catalytic accessory components of the cytoplasmic dynein 1 complex that are thought to be involved in linking dynein to cargos and to adapter proteins that regulate dynein function. Cytoplasmic dynein 1 acts as a motor for the intracellular retrograde motility of vesicles and organelles along microtubules. The intermediate chains mediate the binding of dynein to dynactin via its 150 kDa component (p150-glued) DCTN1. May play a role in mediating the interaction of cytoplasmic dynein with membranous organelles and kinetochores. The polypeptide is Cytoplasmic dynein 1 intermediate chain 1 (DYNC1I1) (Bos taurus (Bovine)).